We begin with the raw amino-acid sequence, 631 residues long: MGILAKIEQPRDLKGLTYPELEQLAQEIRAEMIDVVSANGGHLAPNLGVVELTLALHRVFDSPKDKIIWDVGHQSYVHKLVTGRQKEFKSLRLYKGLSGFPKRCESPHDCFETGHSSTSISAAVGFAKARDLRKEKNQVVAVIGDGAMTGGMAFEALNHAGHTKTNMIVVLNDNEMAIAQNVGAMSSYLNRLRTDPRYDRSKDEIENLLKRIPGIGSKMAKAAEKAKDSLKYLLVPGLLFEEMGFTYLGPVNGHDQIALEQVFEQAKMVKEPVLVHVLTQKGRGYEPSEKNPALFHGVGPFNKVTGEVIKKPAPPTYTQVFGETLCELAEKDPRITAITAAMPSGTGLNLFAQKFPDRFFDVGIAEQHAVTFSAALAFGGMKPVVSIYSTFYQRAYDQVLHDVCLPHANVVMAIDRAGVVGDDGPTHHGVFDISFLRVIPNLVFMAPKDENELRHMLYTSLQLDGPVALRYPRSVGQGVELTEELRELPVGKAEILQEGKDITLIGVGPMVYTCLAAAVELRHRGVEATVINLRYINPLDRESILRYARMTKRIITVEDHMLAGGMGSAVMEVLGDEGLTDVVVERLGYDEYVDQGAISLLHQGYGLSVVGILKAAERLKVLQRIEGRSSV.

Residues His-73 and 114 to 116 (GHS) each bind thiamine diphosphate. Residue Asp-145 coordinates Mg(2+). Thiamine diphosphate-binding positions include 146–147 (GA), Asn-174, Tyr-285, and Glu-366. Asn-174 lines the Mg(2+) pocket.

This sequence belongs to the transketolase family. DXPS subfamily. Homodimer. Mg(2+) is required as a cofactor. Thiamine diphosphate serves as cofactor.

It catalyses the reaction D-glyceraldehyde 3-phosphate + pyruvate + H(+) = 1-deoxy-D-xylulose 5-phosphate + CO2. Its pathway is metabolic intermediate biosynthesis; 1-deoxy-D-xylulose 5-phosphate biosynthesis; 1-deoxy-D-xylulose 5-phosphate from D-glyceraldehyde 3-phosphate and pyruvate: step 1/1. Catalyzes the acyloin condensation reaction between C atoms 2 and 3 of pyruvate and glyceraldehyde 3-phosphate to yield 1-deoxy-D-xylulose-5-phosphate (DXP). The polypeptide is 1-deoxy-D-xylulose-5-phosphate synthase (Desulfitobacterium hafniense (strain Y51)).